A 171-amino-acid chain; its full sequence is MLKRIIWILFLLGLTWGCELFAHDGTVNISGSFRRNTCVLAQDSKQINVQLGDVSLTRFSHGNYGPEKSFIINLQDCGTDVSTVDVTFSGTPDGVQSEMLSIESGTDAASGLAIAILDDAKILIPLNQASKDYSLHSGKVPLTFYAQLRPVNSDVQSGKVNASATFVLHYD.

The signal sequence occupies residues Met1–Gly17.

In terms of biological role, part of the elfADCG-ycbUVF fimbrial operon, which promotes adhesion of bacteria to different abiotic surfaces. This is an uncharacterized protein from Escherichia coli (strain K12).